Here is a 215-residue protein sequence, read N- to C-terminus: UPF0502 protein YceH (215 aa).

N6-acetyllysine is present on Lys-80.

It belongs to the UPF0502 family.

The polypeptide is UPF0502 protein YceH (Shigella boydii serotype 4 (strain Sb227)).